A 67-amino-acid chain; its full sequence is DNA-directed RNA polymerase subunit omega (67 aa).

It belongs to the RNA polymerase subunit omega family. The RNAP catalytic core consists of 2 alpha, 1 beta, 1 beta' and 1 omega subunit. When a sigma factor is associated with the core the holoenzyme is formed, which can initiate transcription.

The enzyme catalyses RNA(n) + a ribonucleoside 5'-triphosphate = RNA(n+1) + diphosphate. Its function is as follows. Promotes RNA polymerase assembly. Latches the N- and C-terminal regions of the beta' subunit thereby facilitating its interaction with the beta and alpha subunits. This chain is DNA-directed RNA polymerase subunit omega, found in Acidovorax ebreus (strain TPSY) (Diaphorobacter sp. (strain TPSY)).